Reading from the N-terminus, the 566-residue chain is Solute carrier family 22 member 16 (566 aa).

The chain crosses the membrane as a helical span at residues 20 to 40 (FASAFQTISCGIHYLASVFIA). Residues N52, N60, and N112 are each glycosylated (N-linked (GlcNAc...) asparagine). The next 5 helical transmembrane spans lie at 149–169 (LIQP…GDIA), 176–196 (PIIW…AFTF), 201–221 (FVIV…VVFV), 237–257 (MHVH…GFLV), and 261–281 (WIYQ…CWML). The N-linked (GlcNAc...) asparagine glycan is linked to N344. The next 6 membrane-spanning stretches (helical) occupy residues 351-371 (TITV…FALN), 381-401 (LNLF…CLGM), 408-428 (NTLA…MLIP), 436-456 (IAMS…IYLY), 468-488 (LAVG…PFCV), and 493-513 (VWIF…GILT).

This sequence belongs to the major facilitator (TC 2.A.1) superfamily. Organic cation transporter (TC 2.A.1.19) family.

The protein localises to the membrane. High affinity carnitine transporter. The sequence is that of Solute carrier family 22 member 16 (slc22a16) from Xenopus laevis (African clawed frog).